Reading from the N-terminus, the 624-residue chain is Sodium/potassium/calcium exchanger 3 (624 aa).

A signal peptide spans 1–25 (RDLLLSQLCFLASVALLLWSLSSLR). At 26–88 (EQKELDLMDL…DIFSNEDRRQ (63 aa)) the chain is on the extracellular side. N-linked (GlcNAc...) asparagine glycans are attached at residues Asn52 and Asn67. The chain crosses the membrane as a helical span at residues 89–109 (GAVVLHVLCAMYMFYALAIVC). The Cytoplasmic segment spans residues 110-133 (DDFFVPSLEKICERLHLSEDVAGA). Residues 130-170 (VAGATFMAAGSSAPELFTSVIGVFITKGDVGVGTIVGSAVF) form an Alpha-1 repeat. The helical transmembrane segment at 134-154 (TFMAAGSSAPELFTSVIGVFI) threads the bilayer. Topologically, residues 155-163 (TKGDVGVGT) are extracellular. A helical membrane pass occupies residues 164 to 184 (IVGSAVFNILCIIGVCGLFAG). The Cytoplasmic segment spans residues 185–191 (QVVALSS). The helical transmembrane segment at 192-212 (WCLLRDSIYYTLSVVALIVFI) threads the bilayer. Over 213 to 215 (YDE) the chain is Extracellular. Residues 216–236 (KVSWWESLVLVLMYLIYIIIM) form a helical membrane-spanning segment. At 237–465 (KYNACIHQCF…WFMVTFASST (229 aa)) the chain is on the cytoplasmic side. A Phosphoserine modification is found at Ser289. A compositionally biased stretch (acidic residues) spans 386–414 (AEADNETENENEDENNENDEEEDEDDDEG). Residues 386–421 (AEADNETENENEDENNENDEEEDEDDDEGPYTPFDP) are disordered. A helical membrane pass occupies residues 466-486 (LWIAAFSYMMVWMVTIIGYTL). Topologically, residues 487 to 491 (GIPDV) are extracellular. Residues 492–512 (IMGITFLAAGTSVPDCMASLI) form a helical membrane-spanning segment. Residues 499–530 (AAGTSVPDCMASLIVARQGMGDMAVSNSIGSN) form an Alpha-2 repeat. The Cytoplasmic segment spans residues 513–530 (VARQGMGDMAVSNSIGSN). A helical membrane pass occupies residues 531–551 (VFDILIGLGLPWALQTLAVDY). Residues 552–561 (GSYIRLNSRG) are Extracellular-facing. Residues 562-582 (LIYSVGLLLASVFVTVFGVHL) form a helical membrane-spanning segment. The Cytoplasmic segment spans residues 583-596 (NKWQLDKKLGCGCL). The chain crosses the membrane as a helical span at residues 597–617 (FLYGVFLCFSIMTEFNVFTFV). Residues 618–624 (NLPMCGD) lie on the Extracellular side of the membrane.

It belongs to the Ca(2+):cation antiporter (CaCA) (TC 2.A.19) family. SLC24A subfamily. In terms of tissue distribution, abundant in the brain. Expressed at low levels in the aorta, uterus and intestine.

It is found in the cell membrane. It catalyses the reaction Ca(2+)(out) + K(+)(out) + 4 Na(+)(in) = Ca(2+)(in) + K(+)(in) + 4 Na(+)(out). Functionally, calcium, potassium:sodium antiporter that transports 1 Ca(2+) and 1 K(+) in exchange for 4 Na(+). The polypeptide is Sodium/potassium/calcium exchanger 3 (Slc24a3) (Rattus norvegicus (Rat)).